The chain runs to 229 residues: Urease accessory protein UreF (229 aa).

Belongs to the UreF family. In terms of assembly, ureD, UreF and UreG form a complex that acts as a GTP-hydrolysis-dependent molecular chaperone, activating the urease apoprotein by helping to assemble the nickel containing metallocenter of UreC. The UreE protein probably delivers the nickel.

The protein resides in the cytoplasm. Functionally, required for maturation of urease via the functional incorporation of the urease nickel metallocenter. The polypeptide is Urease accessory protein UreF (Staphylococcus epidermidis (strain ATCC 35984 / DSM 28319 / BCRC 17069 / CCUG 31568 / BM 3577 / RP62A)).